A 522-amino-acid chain; its full sequence is MKKVYEGEIMFVKVNGEEVELPDGSTVRDALEATGAPYVEGTLVCLISGTRELERTIDTYRIRTTTGSILLELLPDDAPGIVEEWRRIYTELENMRIRWTTPSEIAMGPLRTELEPSRDEFTYDEDEVIMSLSGFSPDSTHIIISKEPHSAVYGVPRENRGVFARITGGKRTVERLTQDDVVKSVEPVVERKSIVESAAVTDLNTELEDGNQLFTYVKVKPSPESPQSVEHFFSMVEDGKLRVDYEANSFIGFYSLQGIKKDPEKIDKRNRGAVTLRNTGRGSGRVYIYREDRVSTPSHNLIGHVTEGMELVDIAGEGDQITVECEPGRIMTVAMTQKEAEDYLREYGIEQIREGIMDDDAIVVVQDPPYTMDILREGKVRTLGIDPDKILEIELDPAAPRSSWYFRRLTGLIDTPIGSLKVHFAFPGMKVVMFEGDKSLAKGLIPENTPERCVKKGNIGITNMSRRHIGMVGVRLEDNDEYGPTGEPFNGTNMIGKITGGIENVEKLKEGDTVYVRERKRG.

This sequence belongs to the UPF0288 family.

The polypeptide is UPF0288 protein MTH_1865 (Methanothermobacter thermautotrophicus (strain ATCC 29096 / DSM 1053 / JCM 10044 / NBRC 100330 / Delta H) (Methanobacterium thermoautotrophicum)).